A 363-amino-acid polypeptide reads, in one-letter code: Putative agmatine deiminase 1 (363 aa).

The Amidino-cysteine intermediate role is filled by Cys-356.

Belongs to the agmatine deiminase family.

It catalyses the reaction agmatine + H2O = N-carbamoylputrescine + NH4(+). In Listeria monocytogenes serovar 1/2a (strain ATCC BAA-679 / EGD-e), this protein is Putative agmatine deiminase 1.